We begin with the raw amino-acid sequence, 342 residues long: GTPase Obg (342 aa).

In terms of domain architecture, Obg spans 1 to 159 (MQFIDRAEIE…RNLRLELKLL (159 aa)). Positions 160-328 (AEVGIIGLPN…LLQAIWHRLD (169 aa)) constitute an OBG-type G domain. GTP contacts are provided by residues 166-173 (GLPNAGKS), 191-195 (FTTLV), 213-216 (DIPG), 280-283 (NKVD), and 309-311 (SAV). Mg(2+) is bound by residues S173 and T193.

It belongs to the TRAFAC class OBG-HflX-like GTPase superfamily. OBG GTPase family. Monomer. Mg(2+) serves as cofactor.

Its subcellular location is the cytoplasm. Its function is as follows. An essential GTPase which binds GTP, GDP and possibly (p)ppGpp with moderate affinity, with high nucleotide exchange rates and a fairly low GTP hydrolysis rate. Plays a role in control of the cell cycle, stress response, ribosome biogenesis and in those bacteria that undergo differentiation, in morphogenesis control. This Crocosphaera subtropica (strain ATCC 51142 / BH68) (Cyanothece sp. (strain ATCC 51142)) protein is GTPase Obg.